Here is a 530-residue protein sequence, read N- to C-terminus: BTB/POZ domain-containing protein 3 (530 aa).

The disordered stretch occupies residues 23-48; the sequence is KNRSKKGSKKANSSGGGGGGGSVGSG. Residues 36 to 46 show a composition bias toward gly residues; the sequence is SGGGGGGGSVG. In terms of domain architecture, BTB spans 128–198; it reads ADVHFVVGPP…IYCDEIDLAA (71 aa). Residues 243 to 308 form the BACK domain; the sequence is FEEPDLTQRC…NWAEVECQRQ (66 aa).

As to expression, in the somatosensory cortex, specifically expressed in spiny stellate neurons during barrel formation. Also expressed in the olfactory bulb, piriform cortex and hippocampus.

The protein resides in the cytoplasm. The protein localises to the cytosol. It is found in the nucleus. In terms of biological role, acts as a key regulator of dendritic field orientation during development of sensory cortex. Also directs dendrites toward active axon terminals when ectopically expressed. This is BTB/POZ domain-containing protein 3 (Btbd3) from Mus musculus (Mouse).